Reading from the N-terminus, the 504-residue chain is ATP synthase subunit alpha (504 aa).

169 to 176 (GDRQTGKT) contributes to the ATP binding site.

This sequence belongs to the ATPase alpha/beta chains family. In terms of assembly, F-type ATPases have 2 components, CF(1) - the catalytic core - and CF(0) - the membrane proton channel. CF(1) has five subunits: alpha(3), beta(3), gamma(1), delta(1), epsilon(1). CF(0) has three main subunits: a(1), b(2) and c(9-12). The alpha and beta chains form an alternating ring which encloses part of the gamma chain. CF(1) is attached to CF(0) by a central stalk formed by the gamma and epsilon chains, while a peripheral stalk is formed by the delta and b chains.

The protein resides in the cell membrane. It carries out the reaction ATP + H2O + 4 H(+)(in) = ADP + phosphate + 5 H(+)(out). Functionally, produces ATP from ADP in the presence of a proton gradient across the membrane. The alpha chain is a regulatory subunit. The sequence is that of ATP synthase subunit alpha from Clostridium kluyveri (strain ATCC 8527 / DSM 555 / NBRC 12016 / NCIMB 10680 / K1).